The primary structure comprises 133 residues: Nucleoside diphosphate kinase (133 aa).

Residues lysine 9, phenylalanine 57, arginine 85, threonine 91, arginine 102, and asparagine 112 each contribute to the ATP site. The active-site Pros-phosphohistidine intermediate is histidine 115.

This sequence belongs to the NDK family. Homotetramer. Mg(2+) serves as cofactor.

It localises to the cytoplasm. It catalyses the reaction a 2'-deoxyribonucleoside 5'-diphosphate + ATP = a 2'-deoxyribonucleoside 5'-triphosphate + ADP. The catalysed reaction is a ribonucleoside 5'-diphosphate + ATP = a ribonucleoside 5'-triphosphate + ADP. In terms of biological role, major role in the synthesis of nucleoside triphosphates other than ATP. The ATP gamma phosphate is transferred to the NDP beta phosphate via a ping-pong mechanism, using a phosphorylated active-site intermediate. The polypeptide is Nucleoside diphosphate kinase (Rubrobacter xylanophilus (strain DSM 9941 / JCM 11954 / NBRC 16129 / PRD-1)).